A 371-amino-acid polypeptide reads, in one-letter code: Transposase for insertion sequence element IS421 (371 aa).

Belongs to the transposase 11 family.

Functionally, involved in the transposition of the insertion sequence IS421. This chain is Transposase for insertion sequence element IS421, found in Escherichia coli.